Consider the following 251-residue polypeptide: Triosephosphate isomerase (251 aa).

A substrate-binding site is contributed by 9 to 11 (NWK). His-95 functions as the Electrophile in the catalytic mechanism. The active-site Proton acceptor is Glu-167. Residues Gly-173, Ser-213, and 234 to 235 (GG) contribute to the substrate site. Ser-213 is modified (phosphoserine).

Belongs to the triosephosphate isomerase family. In terms of assembly, homodimer.

It is found in the cytoplasm. It carries out the reaction D-glyceraldehyde 3-phosphate = dihydroxyacetone phosphate. It functions in the pathway carbohydrate biosynthesis; gluconeogenesis. It participates in carbohydrate degradation; glycolysis; D-glyceraldehyde 3-phosphate from glycerone phosphate: step 1/1. In terms of biological role, involved in the gluconeogenesis. Catalyzes stereospecifically the conversion of dihydroxyacetone phosphate (DHAP) to D-glyceraldehyde-3-phosphate (G3P). The polypeptide is Triosephosphate isomerase (Bacillus cytotoxicus (strain DSM 22905 / CIP 110041 / 391-98 / NVH 391-98)).